The chain runs to 57 residues: Potassium channel toxin alpha-KTx 8.7 (57 aa).

A signal peptide spans 1 to 28 (MSRLYAIILIALVFNVIMTIMPDMKVEA). Disulfide bonds link cysteine 31–cysteine 47, cysteine 34–cysteine 52, and cysteine 38–cysteine 54.

In terms of tissue distribution, expressed by the venom gland.

Its subcellular location is the secreted. Its function is as follows. Inhibits voltage-gated potassium channel rKv1.1/KCNA1 at nanomolar ranges (IC(50)=8.5 nM). The protein is Potassium channel toxin alpha-KTx 8.7 of Mesobuthus eupeus (Lesser Asian scorpion).